We begin with the raw amino-acid sequence, 216 residues long: MEYKANKKLKIIMIGDYNSGKTAIFNEFAGRKFGIYTCPSTFDLFYKEIMIDDELVGYHFWDTAGQERFTSLNRHFYRNANCCVLCFDIHNEESFKNLDKWITELHSKCLENGLESEKLSPPFVLIGTKSDIPRTDKSISNERIEQWCKNIEDQRIIDKVHYFETSAKNSKNIKEPFNIISKFALNYFNSMQKLNESKLNPTLEISNNNNIKSSSC.

GTP is bound at residue 15 to 22 (GDYNSGKT). The Effector region motif lies at 37-44 (TCPSTFDL). GTP is bound by residues 62–66 (DTAGQ) and 128–131 (TKSD). Cysteine 216 is lipidated: S-geranylgeranyl cysteine.

It belongs to the small GTPase superfamily. Rab family.

Its subcellular location is the cell membrane. The polypeptide is Ras-related protein RabN1 (rabN1) (Dictyostelium discoideum (Social amoeba)).